We begin with the raw amino-acid sequence, 470 residues long: MADEFPFEISPMFEGERVRKEGMFVELGGPKSLGLELVRAADMDAIEDDKVTIIGPDLKDMEEGKTYPWAMIFNIGGELVEPDLESVVERRVHDFINYCQGIMHLNQRYDVWMRVSKDTAAKMDSFEPFGKAVMMLFKTELPFIEKMQVTFYTDKDEVEKQMETAKEIFKARDARTKDLHDEDVEVFYGCTLCQSFAPTNVCVVSPDRISLCGAINWFDGRAAAKVDPEGPQFEIAKGDLIDAVTGEYTGVNEIAKKLSSGEFDKIKLHSFFDCPHTSCGCFEVVGFYIPEVDGIGWVDREYQGMAPNGIGFSTMAGQTGGGKQIVGFLGIGVNYFYSPKFIQADGGWNRVVWLPSKLKEKIDEAIPADLKDKIATENDASDIESLKAFLQEKNHPVVATWAAAEEEEEEEEEEEEVAVAAAPMMMPAAGFQMPAMPMMSGGSSGGIKLTFKNAKITIDRMIISEKKEKK.

[Ni-Fe-S] cluster-binding residues include C190, C193, C279, and C281.

It belongs to the CdhC family. Monomer. The ACDS complex is made up of alpha, epsilon, beta, gamma and delta chains with a probable stoichiometry of (alpha(2)epsilon(2))(4)-beta(8)-(gamma(1)delta(1))(8) (Potential). Requires [Ni-Fe-S] cluster as cofactor.

The enzyme catalyses Co(I)-[corrinoid Fe-S protein] + acetyl-CoA + H(+) = methyl-Co(III)-[corrinoid Fe-S protein] + CO + CoA. The protein operates within one-carbon metabolism; methanogenesis from acetate. In terms of biological role, part of a complex that catalyzes the reversible cleavage of acetyl-CoA, allowing growth on acetate as sole source of carbon and energy. The alpha-epsilon complex generates CO from CO(2), while the beta subunit (this protein) combines the CO with CoA and a methyl group to form acetyl-CoA. The methyl group, which is incorporated into acetyl-CoA, is transferred to the beta subunit by a corrinoid iron-sulfur protein (the gamma-delta complex). The protein is Acetyl-CoA decarbonylase/synthase complex subunit beta 2 (cdhC2) of Methanosarcina mazei (strain ATCC BAA-159 / DSM 3647 / Goe1 / Go1 / JCM 11833 / OCM 88) (Methanosarcina frisia).